A 98-amino-acid polypeptide reads, in one-letter code: MTPIQFTFSSAFLLGLSGLAFHRTHLLSALLCLEGMMLSLFIALSLWSLQLSSISFSSAPMLLLAFSACEASVGLALMVATARTHGSDHLQGLNLLQC.

A run of 3 helical transmembrane segments spans residues 1–21 (MTPI…GLAF), 26–46 (LLSA…ALSL), and 59–79 (APML…ALMV).

The protein belongs to the complex I subunit 4L family.

It is found in the mitochondrion membrane. It catalyses the reaction a ubiquinone + NADH + 5 H(+)(in) = a ubiquinol + NAD(+) + 4 H(+)(out). Functionally, core subunit of the mitochondrial membrane respiratory chain NADH dehydrogenase (Complex I) which catalyzes electron transfer from NADH through the respiratory chain, using ubiquinone as an electron acceptor. Part of the enzyme membrane arm which is embedded in the lipid bilayer and involved in proton translocation. This is NADH-ubiquinone oxidoreductase chain 4L (MT-ND4L) from Tetraodon nigroviridis (Spotted green pufferfish).